A 208-amino-acid chain; its full sequence is ATP-dependent Clp protease proteolytic subunit (208 aa).

The active-site Nucleophile is Ser105. The active site involves His130.

It belongs to the peptidase S14 family. As to quaternary structure, fourteen ClpP subunits assemble into 2 heptameric rings which stack back to back to give a disk-like structure with a central cavity, resembling the structure of eukaryotic proteasomes.

The protein localises to the cytoplasm. The enzyme catalyses Hydrolysis of proteins to small peptides in the presence of ATP and magnesium. alpha-casein is the usual test substrate. In the absence of ATP, only oligopeptides shorter than five residues are hydrolyzed (such as succinyl-Leu-Tyr-|-NHMec, and Leu-Tyr-Leu-|-Tyr-Trp, in which cleavage of the -Tyr-|-Leu- and -Tyr-|-Trp bonds also occurs).. In terms of biological role, cleaves peptides in various proteins in a process that requires ATP hydrolysis. Has a chymotrypsin-like activity. Plays a major role in the degradation of misfolded proteins. The polypeptide is ATP-dependent Clp protease proteolytic subunit (Xanthomonas axonopodis pv. citri (strain 306)).